The chain runs to 647 residues: Chaperone protein HtpG (647 aa).

Positions 1–353 are a; substrate-binding; the sequence is MNAHVEQLEF…AQDMSLNVSR (353 aa). A b region spans residues 354-567; the sequence is EILQQDRQIK…AFGMTPALAR (214 aa). A c region spans residues 568-647; that stretch reads IYRASGQEVP…LLAERLARTL (80 aa).

Belongs to the heat shock protein 90 family. As to quaternary structure, homodimer.

The protein resides in the cytoplasm. In terms of biological role, molecular chaperone. Has ATPase activity. The polypeptide is Chaperone protein HtpG (Mycobacterium bovis (strain ATCC BAA-935 / AF2122/97)).